A 672-amino-acid polypeptide reads, in one-letter code: Acetoacetyl-CoA synthetase (672 aa).

The protein belongs to the ATP-dependent AMP-binding enzyme family.

It localises to the cytoplasm. Its subcellular location is the cytosol. It catalyses the reaction acetoacetate + ATP + CoA = acetoacetyl-CoA + AMP + diphosphate. In terms of biological role, activates acetoacetate to acetoacetyl-CoA. The sequence is that of Acetoacetyl-CoA synthetase (aacs) from Xenopus tropicalis (Western clawed frog).